We begin with the raw amino-acid sequence, 311 residues long: Malate dehydrogenase (311 aa).

Residues 7–13 (GAAGGIG) and aspartate 34 each bind NAD(+). Arginine 81 and arginine 87 together coordinate substrate. Residues asparagine 94 and 117–119 (ITN) each bind NAD(+). Substrate-binding residues include asparagine 119 and arginine 153. The active-site Proton acceptor is histidine 177. NAD(+) is bound at residue methionine 227.

It belongs to the LDH/MDH superfamily. MDH type 1 family. As to quaternary structure, homodimer.

The enzyme catalyses (S)-malate + NAD(+) = oxaloacetate + NADH + H(+). Catalyzes the reversible oxidation of malate to oxaloacetate. This Shewanella putrefaciens (strain CN-32 / ATCC BAA-453) protein is Malate dehydrogenase.